The following is a 537-amino-acid chain: Chaperonin GroEL (537 aa).

ATP-binding positions include 29–32 (TLGP), 86–90 (DGTTT), glycine 413, and aspartate 492.

Belongs to the chaperonin (HSP60) family. Forms a cylinder of 14 subunits composed of two heptameric rings stacked back-to-back. Interacts with the co-chaperonin GroES.

It is found in the cytoplasm. The enzyme catalyses ATP + H2O + a folded polypeptide = ADP + phosphate + an unfolded polypeptide.. Its function is as follows. Together with its co-chaperonin GroES, plays an essential role in assisting protein folding. The GroEL-GroES system forms a nano-cage that allows encapsulation of the non-native substrate proteins and provides a physical environment optimized to promote and accelerate protein folding. This chain is Chaperonin GroEL, found in Dehalococcoides mccartyi (strain ATCC BAA-2100 / JCM 16839 / KCTC 5957 / BAV1).